Consider the following 447-residue polypeptide: Gastrin/cholecystokinin type B receptor (447 aa).

Over 1–57 (MELLKLNRSVQGTGPGPGASLCRPGAPLLNSSSVGNLSCEPPRIRGAGTRELELAIR) the chain is Extracellular. N-linked (GlcNAc...) asparagine glycans are attached at residues asparagine 7, asparagine 30, and asparagine 36. Residues 58–79 (ITLYAVIFLMSVGGNMLIIVVL) form a helical membrane-spanning segment. Residues 80–87 (GLSRRLRT) lie on the Cytoplasmic side of the membrane. A helical membrane pass occupies residues 88–109 (VTNAFLLSLAVSDLLLAVACMP). Residues 110-131 (FTLLPNLMGTFIFGTVICKAVS) are Extracellular-facing. Cysteine 127 and cysteine 205 are disulfide-bonded. A helical transmembrane segment spans residues 132 to 150 (YLMGVSVSVSTLSLVAIAL). Topologically, residues 151–170 (ERYSAICRPLQARVWQTRSH) are cytoplasmic. Residues 171-189 (AARVIVATWLLSGLLMVPY) traverse the membrane as a helical segment. Residues 190 to 219 (PVYTVVQPVGPRVLQCVHRWPSARVRQTWS) lie on the Extracellular side of the membrane. Residues 220 to 242 (VLLLLLLFFIPGVVMAVAYGLIS) traverse the membrane as a helical segment. Over 243–333 (RELYLGLRFD…KLLAKKRVVR (91 aa)) the chain is Cytoplasmic. Residues 258 to 285 (DSQSRVRNQGGLPGAVHQNGRCRPETGA) are disordered. Residues 334 to 355 (MLLVIVVLFFLCWLPVYSANTW) traverse the membrane as a helical segment. The Extracellular portion of the chain corresponds to 356–373 (RAFDGPGAHRALSGAPIS). Residues 374–394 (FIHLLSYASACVNPLVYCFMH) traverse the membrane as a helical segment. Over 395–447 (RRFRQACLETCARCCPRPPRARPRALPDEDPPTPSIASLSRLSYTTISTLGPG) the chain is Cytoplasmic. Cysteine 408 is lipidated: S-palmitoyl cysteine.

The protein belongs to the G-protein coupled receptor 1 family. Isoform 1 is expressed in brain, pancreas, stomach, the colon cancer cell line LoVo and the T-lymphoblastoma Jurkat, but not in heart, placenta, liver, lung, skeletal muscle, kidney or the stomach cancer cell line AGS. Expressed at high levels in the small cell lung cancer cell line NCI-H510, at lower levels in NCI-H345, NCI-H69 and GLC-28 cell lines, not expressed in GLC-19 cell line. Within the stomach, expressed at high levels in the mucosa of the gastric fundus and at low levels in the antrum and duodenum. Isoform 2 is present in pancreatic cancer cells and colorectal cancer cells, but not in normal pancreas or colonic mucosa. Isoform 3 is expressed in brain, pancreas, stomach, the stomach cancer cell line AGS and the colon cancer cell line LoVo.

The protein resides in the cell membrane. Receptor for gastrin and cholecystokinin. The CCK-B receptors occur throughout the central nervous system where they modulate anxiety, analgesia, arousal, and neuroleptic activity. This receptor mediates its action by association with G proteins that activate a phosphatidylinositol-calcium second messenger system. In terms of biological role, isoform 2 is constitutively activated and may regulate cancer cell proliferation via a gastrin-independent mechanism. The polypeptide is Gastrin/cholecystokinin type B receptor (Homo sapiens (Human)).